A 383-amino-acid polypeptide reads, in one-letter code: MEDDDEIQSIPSPGDSSLSPQAPPSPPILPTNDVTVAVVKKPQPGLSSQSPSMNALALVVHTPSVTGGGGSGNRNGRGGGGGSGGGGGGRDDCWSEEATKVLIEAWGDRFSEPGKGTLKQQHWKEVAEIVNKSRQCKYPKTDIQCKNRIDTVKKKYKQEKAKIASGDGPSKWVFFKKLESLIGGTTTFIASSKASEKAPMGGALGNSRSSMFKRQTKGNQIVQQQQEKRGSDSMRWHFRKRSASETESESDPEPEASPEESAESLPPLQPIQPLSFHMPKRLKVDKSGGGGSGVGDVARAILGFTEAYEKAETAKLKLMAELEKERMKFAKEMELQRMQFLKTQLEITQNNQEEEERSRQRGERRIVDDDDDRNGKNNGNVSS.

Disordered regions lie at residues M1–N32, H61–W94, I189–G295, and E346–S383. Gly residues predominate over residues T66 to G88. The Myb-like domain occupies W94 to K153. Residues N206 to Q225 are compositionally biased toward polar residues. Residues Q226 to R235 are compositionally biased toward basic and acidic residues. The Bipartite nuclear localization signal signature appears at K228 to R241. Residues T246–A262 are compositionally biased toward acidic residues. Residues E263–L274 show a composition bias toward low complexity. A coiled-coil region spans residues F304–R365. Residues E356–V367 are compositionally biased toward basic and acidic residues.

The protein localises to the nucleus. Functionally, transcription repressor that binds specific DNA sequence such as the GT-box-like motif 5'-CGTGATT-3' in the AT2S3 promoter. Negative regulator of seed maturation genes during seed germination and seedling development. May target GT-box-containing embryonic genes by competing with the binding of transcriptional activators to this promoter region. Contributes to the maintenance and control of seed filling and may repress the maturation program during early embryogenesis. The sequence is that of Trihelix transcription factor ASIL1 from Arabidopsis thaliana (Mouse-ear cress).